A 522-amino-acid polypeptide reads, in one-letter code: Glycogen synthase (522 aa).

A disordered region spans residues 1-29; sequence MISAVLDTQGDHPQQQAGDRAAPSVPVPG. Residue K58 participates in ADP-alpha-D-glucose binding.

The protein belongs to the glycosyltransferase 1 family. Bacterial/plant glycogen synthase subfamily.

The enzyme catalyses [(1-&gt;4)-alpha-D-glucosyl](n) + ADP-alpha-D-glucose = [(1-&gt;4)-alpha-D-glucosyl](n+1) + ADP + H(+). Its pathway is glycan biosynthesis; glycogen biosynthesis. In terms of biological role, synthesizes alpha-1,4-glucan chains using ADP-glucose. This chain is Glycogen synthase, found in Pseudomonas fluorescens (strain ATCC BAA-477 / NRRL B-23932 / Pf-5).